A 207-amino-acid polypeptide reads, in one-letter code: Oligoribonuclease (207 aa).

One can recognise an Exonuclease domain in the interval 8–172 (LVWIDCEMTG…ADILESVREL (165 aa)). Residue Y129 is part of the active site.

This sequence belongs to the oligoribonuclease family.

Its subcellular location is the cytoplasm. Functionally, 3'-to-5' exoribonuclease specific for small oligoribonucleotides. This is Oligoribonuclease from Leifsonia xyli subsp. xyli (strain CTCB07).